Here is a 660-residue protein sequence, read N- to C-terminus: Galactocerebrosidase (660 aa).

A signal peptide spans 1–18 (MQTHNFLCIISVILGCSA). 2 residues coordinate substrate: threonine 87 and tryptophan 129. N-linked (GlcNAc...) asparagine glycosylation is present at asparagine 147. Residue asparagine 175 participates in substrate binding. Glutamate 176 serves as the catalytic Proton donor/acceptor. Residue glutamate 251 is the Nucleophile of the active site. An intrachain disulfide couples cysteine 264 to cysteine 371. Asparagine 293 and asparagine 356 each carry an N-linked (GlcNAc...) asparagine glycan. Substrate is bound at residue arginine 373. Asparagine 413, asparagine 465, asparagine 495, asparagine 499, asparagine 537, and asparagine 578 each carry an N-linked (GlcNAc...) asparagine glycan.

The protein belongs to the glycosyl hydrolase 59 family.

The protein resides in the lysosome. It carries out the reaction a beta-D-galactosyl-(1&lt;-&gt;1')-N-acylsphing-4-enine + H2O = an N-acylsphing-4-enine + D-galactose. The enzyme catalyses beta-D-galactosyl-(1&lt;-&gt;1)-sphing-4-enine + H2O = sphing-4-enine + D-galactose. It catalyses the reaction a D-galactosylceramide + H2O = an N-acyl-sphingoid base + D-galactose. In terms of biological role, hydrolyzes the galactose ester bonds of glycolipids such as galactosylceramide and galactosylsphingosine. The chain is Galactocerebrosidase from Danio rerio (Zebrafish).